We begin with the raw amino-acid sequence, 670 residues long: Alpha-1,4-glucan:maltose-1-phosphate maltosyltransferase (670 aa).

Positions 262, 322, and 357 each coordinate alpha-maltose 1-phosphate. The Nucleophile role is filled by Asp393. Asn394 lines the alpha-maltose 1-phosphate pocket. Glu422 serves as the catalytic Proton donor. 534-535 lines the alpha-maltose 1-phosphate pocket; sequence KY.

This sequence belongs to the glycosyl hydrolase 13 family. GlgE subfamily. As to quaternary structure, homodimer.

The enzyme catalyses alpha-maltose 1-phosphate + [(1-&gt;4)-alpha-D-glucosyl](n) = [(1-&gt;4)-alpha-D-glucosyl](n+2) + phosphate. Maltosyltransferase that uses maltose 1-phosphate (M1P) as the sugar donor to elongate linear or branched alpha-(1-&gt;4)-glucans. Is involved in a branched alpha-glucan biosynthetic pathway from trehalose, together with TreS, Mak and GlgB. This chain is Alpha-1,4-glucan:maltose-1-phosphate maltosyltransferase, found in Chlorobaculum tepidum (strain ATCC 49652 / DSM 12025 / NBRC 103806 / TLS) (Chlorobium tepidum).